The following is an 880-amino-acid chain: Leucine--tRNA ligase (880 aa).

Positions 46–56 match the 'HIGH' region motif; sequence PYPSGALHMGH. Residues 638 to 642 carry the 'KMSKS' region motif; that stretch reads KMSKS. Lysine 641 contributes to the ATP binding site.

The protein belongs to the class-I aminoacyl-tRNA synthetase family.

The protein localises to the cytoplasm. The enzyme catalyses tRNA(Leu) + L-leucine + ATP = L-leucyl-tRNA(Leu) + AMP + diphosphate. This is Leucine--tRNA ligase from Xanthomonas oryzae pv. oryzae (strain MAFF 311018).